The sequence spans 429 residues: Glutamate-1-semialdehyde 2,1-aminomutase 2 (429 aa).

Residue Lys268 is modified to N6-(pyridoxal phosphate)lysine.

The protein belongs to the class-III pyridoxal-phosphate-dependent aminotransferase family. HemL subfamily. As to quaternary structure, homodimer. It depends on pyridoxal 5'-phosphate as a cofactor.

The protein resides in the cytoplasm. It carries out the reaction (S)-4-amino-5-oxopentanoate = 5-aminolevulinate. Its pathway is porphyrin-containing compound metabolism; protoporphyrin-IX biosynthesis; 5-aminolevulinate from L-glutamyl-tRNA(Glu): step 2/2. The protein is Glutamate-1-semialdehyde 2,1-aminomutase 2 of Bacillus cereus (strain AH820).